Here is a 559-residue protein sequence, read N- to C-terminus: Alpha-(1,6)-fucosyltransferase (559 aa).

Residues 1–4 lie on the Cytoplasmic side of the membrane; it reads MLKC. Residues 5–24 form a helical; Signal-anchor for type II membrane protein membrane-spanning segment; that stretch reads IAAVGTVVWMTMFLFLYSQL. Residues 25–559 lie on the Lumenal side of the membrane; it reads SNNQSGGDSI…RKFKFEALLD (535 aa). Residue N27 is glycosylated (N-linked (GlcNAc...) asparagine). Over residues 63 to 74 the composition is skewed to basic and acidic residues; it reads QERNDQHKKIME. The interval 63 to 90 is disordered; sequence QERNDQHKKIMEQSHQLPPNPENPSLPK. Positions 80 to 90 are enriched in pro residues; the sequence is PPNPENPSLPK. N134 is a glycosylation site (N-linked (GlcNAc...) asparagine). Cystine bridges form between C188–C251, C196–C214, and C202–C206. In terms of domain architecture, GT23 spans 190–480; that stretch reads EAKTLVCNLD…ADDGSKFHSL (291 aa). The important for donor substrate binding stretch occupies residues 351–352; that stretch reads RR. C452 and C459 are joined by a disulfide. Positions 489–550 constitute an SH3 domain; that stretch reads QQAHEVIVIE…PSYKVVNDWR (62 aa).

The protein belongs to the glycosyltransferase 23 family. The cofactor is Mn(2+). Mg(2+) is required as a cofactor.

The protein localises to the golgi apparatus. It is found in the golgi stack membrane. The catalysed reaction is N(4)-{beta-D-GlcNAc-(1-&gt;2)-alpha-D-Man-(1-&gt;3)-[beta-D-GlcNAc-(1-&gt;2)-alpha-D-Man-(1-&gt;6)]-beta-D-Man-(1-&gt;4)-beta-D-GlcNAc-(1-&gt;4)-beta-D-GlcNAc}-L-asparaginyl-[protein] + GDP-beta-L-fucose = an N(4)-{beta-D-GlcNAc-(1-&gt;2)-alpha-D-Man-(1-&gt;3)-[beta-D-GlcNAc-(1-&gt;2)-alpha-D-Man-(1-&gt;6)]-beta-D-Man-(1-&gt;4)-beta-D-GlcNAc-(1-&gt;4)-[alpha-L-Fuc-(1-&gt;6)]-beta-D-GlcNAc}-L-asparaginyl-[protein] + GDP + H(+). It participates in protein modification; protein glycosylation. Its activity is regulated as follows. Inhibited by Fe(3+), Ni(2+) and Cu(2+). In terms of biological role, catalyzes the addition of fucose in alpha 1-6 linkage to the first GlcNAc residue, next to the peptide chains in N-glycans. The addition is prevented if the GlcNAc residue is already fucosylated. Involved in susceptibility to the nematotoxic C.cinerea galectin Cgl2, likely by contributing to the synthesis of core alpha-1,6-fucosylated N-glycans to which Cgl2 binds. The protein is Alpha-(1,6)-fucosyltransferase of Caenorhabditis elegans.